The chain runs to 641 residues: Tetracycline resistance protein TetQ (641 aa).

The region spanning 1–244 (MNIINLGILA…AITSFILPPA (244 aa)) is the tr-type G domain. GTP is bound by residues 10–17 (AHIDAGKT), 74–78 (DTPGH), and 128–131 (NKID).

This sequence belongs to the TRAFAC class translation factor GTPase superfamily. Classic translation factor GTPase family. TetM/TetO subfamily.

In terms of biological role, abolishes the inhibitory effect of tetracyclin on protein synthesis by a non-covalent modification of the ribosomes. This chain is Tetracycline resistance protein TetQ (tetQ), found in Bacteroides thetaiotaomicron.